A 263-amino-acid polypeptide reads, in one-letter code: Elongin-A (263 aa).

2 disordered regions span residues 112 to 147 (KLEQSKQNKRIVPLEREPRAARPPKRPRPMSNYCPK) and 170 to 263 (SATS…PKRI). 2 stretches are compositionally biased toward polar residues: residues 186–206 (RSSSNATNTSTKRPLTSNTYP) and 214–229 (SFTSQNFKSFNAVKTQ). The segment covering 230-245 (PSSSSSPSISRPTSFP) has biased composition (low complexity). Positions 253–263 (SRFSSQVPKRI) are enriched in polar residues.

Belongs to the ELA1 family. In terms of assembly, heterodimer with elc1. Component of a CRL3 E3 ubiquitin ligase complex consisting of a cullin, the linker protein elc1, the substrate receptor pof4/ela1, and the RING protein rbx1. Interacts with skp1.

In terms of biological role, as part of the CRL3 E3 ubiquitin ligase complex; polyubiquitylates monoubiquitylated RNA polymerase II subunit rpb1 to trigger its proteolysis; plays a role in global genomic repair. The chain is Elongin-A (pof4) from Schizosaccharomyces pombe (strain 972 / ATCC 24843) (Fission yeast).